A 377-amino-acid polypeptide reads, in one-letter code: Uroporphyrinogen decarboxylase (377 aa).

Substrate is bound by residues 40 to 44, aspartate 89, tyrosine 169, serine 224, and histidine 354; that span reads RQAGR.

Belongs to the uroporphyrinogen decarboxylase family. Homodimer.

The protein localises to the cytoplasm. It catalyses the reaction uroporphyrinogen III + 4 H(+) = coproporphyrinogen III + 4 CO2. Its pathway is porphyrin-containing compound metabolism; protoporphyrin-IX biosynthesis; coproporphyrinogen-III from 5-aminolevulinate: step 4/4. Its function is as follows. Catalyzes the decarboxylation of four acetate groups of uroporphyrinogen-III to yield coproporphyrinogen-III. This is Uroporphyrinogen decarboxylase from Leifsonia xyli subsp. xyli (strain CTCB07).